Reading from the N-terminus, the 643-residue chain is MDLYSELTAKYQTVPAIATEIINLEAILNLPKPTEAFMSDIHGEYNAFQHVLRNGSGNVKSKIRSCFRDEMTEATLQRFAFLVYYPSERMAAIHREMAGDDLQQWYLTTFRRLIRLLAFTATKYTRSKVRKAMAPEFVYITEELLYNDADTPDKLAYYWQIIRNLIVLEQADQWIAATCQTIQRLTVDHFHVVGDIYDRGPAPDQVVESLIRRDRRHSVDIQWGNHDILWIGAAAGSALCIANLVRISARYNNLSILEDVYGINLRHLARLAEQYYQDNPAFSPKMERSDRPITEAERLQITQIHQAIAMIQFKLEGPVIKRRPEFDMDHRLVLEKLAPDFSTIKLNGDTYTIENGCFATVDPADPYKLLPEEQEVIDSLVESFTHSEKLHRHMDFLLDHGSMYLRYNRNLLLHGCVPVDEDGNFIGLTIKGTTYTGRQLFDMLEANLRLAYSQPTENADLATDLMWYLWTGPNSPLFGKHDMTTFERYFISDPKAHVEGRNPYYHLRKDPEFIKKILAEFVLDPEVGHVINGHTPVKKGTDPIMANNKMIVIDGGFSKPYQKTTGIGGYTLLDNSYGMQLVTHQPFTTKADAIANLTDIISTRRVVETEARRRTVAETDIGTELQDEVEVLKRRLGELREEE.

Belongs to the FBPase class 3 family. Requires Mn(2+) as cofactor.

It carries out the reaction beta-D-fructose 1,6-bisphosphate + H2O = beta-D-fructose 6-phosphate + phosphate. It participates in carbohydrate biosynthesis; gluconeogenesis. The polypeptide is Fructose-1,6-bisphosphatase class 3 (Lacticaseibacillus casei (strain BL23) (Lactobacillus casei)).